The primary structure comprises 64 residues: DNA gyrase inhibitor YacG (64 aa).

Zn(2+)-binding residues include cysteine 7, cysteine 10, cysteine 26, and cysteine 30. Residues serine 44 to tyrosine 64 form a disordered region.

It belongs to the DNA gyrase inhibitor YacG family. Interacts with GyrB. Zn(2+) is required as a cofactor.

In terms of biological role, inhibits all the catalytic activities of DNA gyrase by preventing its interaction with DNA. Acts by binding directly to the C-terminal domain of GyrB, which probably disrupts DNA binding by the gyrase. This Idiomarina loihiensis (strain ATCC BAA-735 / DSM 15497 / L2-TR) protein is DNA gyrase inhibitor YacG.